The following is a 700-amino-acid chain: Phosphoribosylformylglycinamidine synthase subunit PurL (700 aa).

Histidine 34 is a catalytic residue. Tyrosine 37 lines the ATP pocket. A Mg(2+)-binding site is contributed by glutamate 79. Substrate-binding positions include 80 to 83 (SHNH) and arginine 102. The active-site Proton acceptor is the histidine 81. Aspartate 103 serves as a coordination point for Mg(2+). Position 227 (glutamine 227) interacts with substrate. Position 255 (aspartate 255) interacts with Mg(2+). 299 to 301 (ESQ) serves as a coordination point for substrate. ATP is bound by residues aspartate 476 and glycine 513. Asparagine 514 is a Mg(2+) binding site. Serine 516 is a binding site for substrate.

Belongs to the FGAMS family. In terms of assembly, monomer. Part of the FGAM synthase complex composed of 1 PurL, 1 PurQ and 2 PurS subunits.

The protein resides in the cytoplasm. The enzyme catalyses N(2)-formyl-N(1)-(5-phospho-beta-D-ribosyl)glycinamide + L-glutamine + ATP + H2O = 2-formamido-N(1)-(5-O-phospho-beta-D-ribosyl)acetamidine + L-glutamate + ADP + phosphate + H(+). The protein operates within purine metabolism; IMP biosynthesis via de novo pathway; 5-amino-1-(5-phospho-D-ribosyl)imidazole from N(2)-formyl-N(1)-(5-phospho-D-ribosyl)glycinamide: step 1/2. In terms of biological role, part of the phosphoribosylformylglycinamidine synthase complex involved in the purines biosynthetic pathway. Catalyzes the ATP-dependent conversion of formylglycinamide ribonucleotide (FGAR) and glutamine to yield formylglycinamidine ribonucleotide (FGAM) and glutamate. The FGAM synthase complex is composed of three subunits. PurQ produces an ammonia molecule by converting glutamine to glutamate. PurL transfers the ammonia molecule to FGAR to form FGAM in an ATP-dependent manner. PurS interacts with PurQ and PurL and is thought to assist in the transfer of the ammonia molecule from PurQ to PurL. This Halobacterium salinarum (strain ATCC 29341 / DSM 671 / R1) protein is Phosphoribosylformylglycinamidine synthase subunit PurL.